Consider the following 1813-residue polypeptide: Latent-transforming growth factor beta-binding protein 2 (1813 aa).

The first 35 residues, 1 to 35 (MRAPTTARCSGCIQRVRWRGFLPLVLAVLMGTSHA), serve as a signal peptide directing secretion. Residues 94 to 115 (NPGWLAEAEARRPPRTQQLRRV) form a heparin-binding region. The tract at residues 103–152 (ARRPPRTQQLRRVQPPVQTRRSHPRGQQQIAARAAPSVARLETPQRPAAA) is disordered. Residues 108 to 132 (RTQQLRRVQPPVQTRRSHPRGQQQI) are compositionally biased toward polar residues. N175 carries an N-linked (GlcNAc...) asparagine glycan. Residues 181-213 (IKPVCQPPCQNRGSCSRPQVCICRSGFRGARCE) enclose the EGF-like 1 domain. Cystine bridges form between C185–C195, C189–C201, and C203–C212. Residues 220 to 305 (EFDPQNARPV…QLMSNALPSG (86 aa)) are disordered. The tract at residues 226–243 (ARPVPRRSVERAPGPHRS) is heparin-binding. Residues 257–266 (LVPPPSPPPS) are compositionally biased toward pro residues. Polar residues predominate over residues 293–302 (ANGQLMSNAL). N328 carries N-linked (GlcNAc...) asparagine glycosylation. Heparin is bound at residue 329–339 (LTEKIKKIKVV). The EGF-like 2 domain maps to 381–413 (RIYFCQIPCLNGGRCIGRDECWCPANSTGKFCH). 3 disulfides stabilise this stretch: C385-C395, C389-C401, and C403-C412. N406 carries N-linked (GlcNAc...) asparagine glycosylation. A Phosphoserine modification is found at S491. The disordered stretch occupies residues 492-524 (VETRASHRPHGNLGHSPWASNSIPARAGEAPRP). The 53-residue stretch at 536-588 (GQCYLSTVNGQCANPLGSLTSQEDCCGSVGTFWGVTSCAPCPPRQEGPAFPVI) folds into the TB 1 domain. Disulfide bonds link C538–C560, C547–C573, and C561–C576. N-linked (GlcNAc...) asparagine glycosylation occurs at N603. Positions 609–649 (DINECLTLGLCKDSECVNTRGSYLCTCRPGLMLDPSRSRCV) constitute an EGF-like 3; calcium-binding domain. 7 disulfide bridges follow: C613/C624, C619/C633, C635/C648, C661/C683, C670/C696, C684/C699, and C685/C711. Residues 659 to 711 (GLCYRSLGSGTCTLPLVHRITKQICCCSRVGKAWGSTCEQCPLPGTEAFREIC) enclose the TB 2 domain. Disordered regions lie at residues 730–761 (KAEE…QPLR) and 787–819 (SAPH…PAEE). An EGF-like 4 domain is found at 835 to 877 (DFDPCFAGASNICGPGTCVSLPNGYRCVCSPGYQLHPSQDYCT). Cystine bridges form between C839-C852, C847-C861, C863-C876, C882-C893, C887-C902, C904-C919, C925-C936, C931-C945, C947-C959, C965-C976, C971-C985, C988-C999, C1005-C1016, C1011-C1025, C1027-C1040, C1046-C1057, C1052-C1066, C1069-C1082, C1088-C1099, C1094-C1108, C1111-C1124, C1130-C1142, C1137-C1151, C1153-C1165, C1171-C1183, C1177-C1192, C1194-C1207, C1213-C1224, C1219-C1233, C1235-C1249, C1255-C1268, C1263-C1277, C1281-C1293, C1299-C1311, C1305-C1320, C1322-C1335, C1341-C1353, C1348-C1362, C1364-C1378, C1405-C1428, C1415-C1440, C1429-C1443, C1430-C1455, C1481-C1494, C1489-C1503, C1505-C1518, C1524-C1534, C1529-C1543, and C1545-C1558. An EGF-like 5; calcium-binding domain is found at 878 to 920 (DDNECMRNPCEGRGRCVNSVGSYSCLCYPGYTLVTLGDTQECQ). One can recognise an EGF-like 6; calcium-binding domain in the interval 921–960 (DIDECEQPGVCSGGRCSNTEGSYHCECDRGYIMVRKGHCQ). The EGF-like 7; calcium-binding domain occupies 961–1000 (DINECRHPGTCPDGRCVNSPGSYTCLACEEGYVGQSGSCV). Residues 1001–1041 (DVNECLTPGICTHGRCINMEGSFRCSCEPGYEVTPDKKGCR) enclose the EGF-like 8; calcium-binding domain. The EGF-like 9; calcium-binding domain maps to 1042 to 1083 (DVDECASRASCPTGLCLNTEGSFTCSACQSGYWVNEDGTACE). One can recognise an EGF-like 10; calcium-binding domain in the interval 1084-1125 (DLDECAFPGVCPTGVCTNTVGSFSCKDCDQGYRPNPLGNRCE). The EGF-like 11; calcium-binding domain occupies 1126–1166 (DVDECEGPQSSCRGGECKNTEGSYQCLCHQGFQLVNGTMCE). The N-linked (GlcNAc...) asparagine glycan is linked to N1161. The EGF-like 12; calcium-binding domain maps to 1167–1208 (DVNECVGEEHCAPHGECLNSLGSFFCLCAPGFASAEGGTRCQ). Residues 1209 to 1250 (DVDECAATDPCPGGHCVNTEGSFSCLCETASFQPSPDSGECL) enclose the EGF-like 13; calcium-binding domain. The 44-residue stretch at 1251-1294 (DIDECEDREDPVCGAWRCENSPGSYRCILDCQPGFYVAPNGDCI) folds into the EGF-like 14; calcium-binding domain. Residues 1295 to 1336 (DIDECANDTVCGNHGFCDNTDGSFRCLCDQGFETSPSGWECV) enclose the EGF-like 15; calcium-binding domain. N1301 carries an N-linked (GlcNAc...) asparagine glycan. In terms of domain architecture, EGF-like 16; calcium-binding spans 1337–1379 (DVNECELMMAVCGDALCENVEGSFLCLCASDLEEYDAEEGHCR). Residues 1403 to 1455 (MECYSEHNGGPPCSQILGQNSTQAECCCTQGARWGKACAPCPSEDSVEFSQLC) form the TB 3 domain. N-linked (GlcNAc...) asparagine glycosylation occurs at N1422. The EGF-like 17; calcium-binding domain occupies 1477–1519 (DADECVLFGPALCQNGRCSNIVPGYICLCNPGYHYDASSRKCQ). Residues 1520 to 1559 (DHNECQDLACENGECVNQEGSFHCLCNPPLTLDLSGQRCV) enclose the EGF-like 18; calcium-binding domain. The N-linked (GlcNAc...) asparagine glycan is linked to N1560. The TB 4 domain maps to 1576 to 1628 (DICWKKVTNDVCSQPLRGHHTTYTECCCQDGEAWSQQCALCPPRSSEVYAQLC). 4 cysteine pairs are disulfide-bonded: C1578–C1601, C1587–C1613, C1602–C1616, and C1603–C1628. The tract at residues 1631-1813 (ARIEAERGAG…PGPPHCAAKE (183 aa)) is C-terminal domain. Residues 1671-1717 (YLGPEDTAPEPPFSNPASQPGDNTPVLEPPLQPSELQPHYLASHSEP) form a disordered region. One can recognise an EGF-like 19; calcium-binding domain in the interval 1725 to 1765 (QAEECGILNGCENGRCVRVREGYTCDCFEGFQLDAPTLACV). 6 disulfides stabilise this stretch: C1729–C1740, C1735–C1749, C1751–C1764, C1770–C1785, C1780–C1794, and C1796–C1809. The 45-residue stretch at 1766-1810 (DVNECEDLNGPARLCAHGHCENTEGSYRCHCSPGYVAEPGPPHCA) folds into the EGF-like 20; calcium-binding domain.

This sequence belongs to the LTBP family. Forms part of the large latent transforming growth factor beta precursor complex; removal is essential for activation of complex. Interacts with SDC4. Interacts (via C-terminal domain) with FBN1 (via N-terminal domain) in a Ca(+2)-dependent manner. N-Glycosylated. In terms of processing, contains hydroxylated asparagine residues. In terms of tissue distribution, expressed in the anterior chamber of the eye.

It localises to the secreted. The protein localises to the extracellular space. It is found in the extracellular matrix. In terms of biological role, may play an integral structural role in elastic-fiber architectural organization and/or assembly. In Mus musculus (Mouse), this protein is Latent-transforming growth factor beta-binding protein 2 (Ltbp2).